A 109-amino-acid polypeptide reads, in one-letter code: Parvalbumin beta (109 aa).

EF-hand domains follow at residues 38-73 (KSKD…FDGK) and 77-109 (LTDK…VTKG). Ca(2+) is bound by residues Asp-51, Asp-53, Ser-55, Tyr-57, Glu-59, Glu-62, Asp-90, Asp-92, Asp-94, Lys-96, and Glu-101.

This sequence belongs to the parvalbumin family.

In terms of biological role, in muscle, parvalbumin is thought to be involved in relaxation after contraction. It binds two calcium ions. The polypeptide is Parvalbumin beta (Boa constrictor (Boa)).